A 149-amino-acid chain; its full sequence is Lipoprotein signal peptidase (149 aa).

Transmembrane regions (helical) follow at residues 24 to 44 (SHIA…LTNL), 57 to 77 (KMWF…YLLW), and 81 to 101 (GKWL…GNFI). Active-site residues include D111 and D127. The helical transmembrane segment at 122–142 (IFNFADSCLTVGVIFILIGVL) threads the bilayer.

It belongs to the peptidase A8 family.

It is found in the cell membrane. The enzyme catalyses Release of signal peptides from bacterial membrane prolipoproteins. Hydrolyzes -Xaa-Yaa-Zaa-|-(S,diacylglyceryl)Cys-, in which Xaa is hydrophobic (preferably Leu), and Yaa (Ala or Ser) and Zaa (Gly or Ala) have small, neutral side chains.. The protein operates within protein modification; lipoprotein biosynthesis (signal peptide cleavage). This protein specifically catalyzes the removal of signal peptides from prolipoproteins. The polypeptide is Lipoprotein signal peptidase (Lactiplantibacillus plantarum (strain ATCC BAA-793 / NCIMB 8826 / WCFS1) (Lactobacillus plantarum)).